The chain runs to 90 residues: Protein RALF-like 3 (90 aa).

A signal peptide spans 1 to 29; that stretch reads MSNLRGTNRFILVAVLVSFVFLSIMNAEA. Intrachain disulfides connect Cys-59–Cys-67 and Cys-80–Cys-86.

The protein belongs to the plant rapid alkalinization factor (RALF) family.

The protein resides in the secreted. In terms of biological role, cell signaling peptide that may regulate plant stress, growth, and development. Mediates a rapid alkalinization of extracellular space by mediating a transient increase in the cytoplasmic Ca(2+) concentration leading to a calcium-dependent signaling events through a cell surface receptor and a concomitant activation of some intracellular mitogen-activated protein kinases. The protein is Protein RALF-like 3 (RALFL3) of Arabidopsis thaliana (Mouse-ear cress).